The primary structure comprises 389 residues: Na(+)/H(+) antiporter NhaA 1 (389 aa).

Helical transmembrane passes span 12–32, 62–82, 97–117, 128–148, 157–177, 184–204, 220–240, 260–280, 282–302, 331–351, and 365–385; these read VLNE…ALLV, FLLW…GLEL, IVLP…LFAL, GWAI…MMCG, IFLL…IAIF, IAAF…NLLG, ISVL…AFFI, FWIA…VNLS, IDIG…LFVG, LYGV…IDGL, and LAIL…LKFF.

This sequence belongs to the NhaA Na(+)/H(+) (TC 2.A.33) antiporter family.

The protein resides in the cell inner membrane. The catalysed reaction is Na(+)(in) + 2 H(+)(out) = Na(+)(out) + 2 H(+)(in). In terms of biological role, na(+)/H(+) antiporter that extrudes sodium in exchange for external protons. This is Na(+)/H(+) antiporter NhaA 1 from Campylobacter jejuni subsp. jejuni serotype O:2 (strain ATCC 700819 / NCTC 11168).